A 632-amino-acid chain; its full sequence is Arginyl-tRNA--protein transferase 1 (632 aa).

The segment covering 1 to 18 has biased composition (polar residues); it reads MSLKNDASSSHDGGSNRE. Disordered regions lie at residues 1–27, 113–144, 284–312, and 517–580; these read MSLKNDASSSHDGGSNRESVIDDHGRR, KLDVQPREQRGASSSGDVSDTRRKTLGAAKSE, NGNISRGANSLDGSETLHAKKDSENHQAR, and PAAS…NDIN. Positions 113–122 are enriched in basic and acidic residues; sequence KLDVQPREQR. Over residues 285–296 the composition is skewed to polar residues; sequence GNISRGANSLDG. Over residues 298–310 the composition is skewed to basic and acidic residues; that stretch reads ETLHAKKDSENHQ. The segment covering 538 to 563 has biased composition (acidic residues); the sequence is SDEDEDEDEDDDDDDDDDEEMYETES. Residues 564 to 578 are compositionally biased toward basic and acidic residues; that stretch reads EDSHIESDPGSKDND.

It belongs to the R-transferase family.

It catalyses the reaction an N-terminal L-alpha-aminoacyl-[protein] + L-arginyl-tRNA(Arg) = an N-terminal L-arginyl-L-aminoacyl-[protein] + tRNA(Arg) + H(+). Functionally, involved in the post-translational conjugation of arginine to the N-terminal aspartate or glutamate of a protein. This arginylation is required for degradation of the protein via the ubiquitin pathway. Component of the N-end rule pathway with ATE2 and PRT6. The N-end rule pathway regulates seed after-ripening, seedling sugar sensitivity, seedling lipid breakdown, and abscisic acid (ABA) sensitivity of germination. The end-rule pathway regulates various aspects of leaf and shoot development. Involved in the oxygen-dependent N-arginylation of RAP2-12, an activator of hypoxic gene expression. This N-terminal modification leads to ubiquitination by PRT6 and subsequent degradation of RAP2-12 under aerobic conditions. Has an important role in the progression of leaf senescence. Involved in disease resistance. The end-rule pathway plays a role in regulating the timing and amplitude of the immune response following infection with the bacterial pathogen Pseudomonas syringae pv tomato. Regulates the biosynthesis of plant-defense metabolites such as glucosinolates, and the biosynthesis and response to the phytohormone jasmonate (JA), which plays a key role in plant immunity. This is Arginyl-tRNA--protein transferase 1 from Arabidopsis thaliana (Mouse-ear cress).